A 436-amino-acid chain; its full sequence is GTPase Der (436 aa).

EngA-type G domains are found at residues 3–168 (PLIA…PESD) and 177–352 (IRLA…QNRS). Residues 9–16 (GRPNVGKS), 56–60 (DTGGY), 120–123 (NKAE), 183–190 (GRPNVGKS), 230–234 (DTAGL), and 295–298 (NKWD) each bind GTP. A KH-like domain is found at 353–436 (RKISTSALNR…VTISLRFMQK (84 aa)).

The protein belongs to the TRAFAC class TrmE-Era-EngA-EngB-Septin-like GTPase superfamily. EngA (Der) GTPase family. Associates with the 50S ribosomal subunit.

GTPase that plays an essential role in the late steps of ribosome biogenesis. In Chlorobium luteolum (strain DSM 273 / BCRC 81028 / 2530) (Pelodictyon luteolum), this protein is GTPase Der.